The chain runs to 72 residues: Aurein-2.3 (72 aa).

Positions 1–22 (MAFLKKSLFLVLFLGLVSLSIC) are cleaved as a signal peptide. A propeptide spanning residues 23 to 49 (EKEKRQNGEDEDENEAANHEEGSEEKR) is cleaved from the precursor. The tract at residues 27–47 (RQNGEDEDENEAANHEEGSEE) is disordered. The segment covering 38–47 (AANHEEGSEE) has biased composition (basic and acidic residues). A Leucine amide modification is found at Leu-65. Positions 69 to 72 (NDVE) are excised as a propeptide.

Post-translationally, amidation is essential for antibacterial activity against Gram-positive bacteria. Expressed by the skin dorsal glands.

The protein resides in the secreted. Its subcellular location is the target cell membrane. Functionally, amphipathic alpha-helical antimicrobial peptide with weak to moderate activity against Gram-positive bacteria, and no activity against Gram-negative bacteria. Probably acts by disturbing membrane functions with its amphipathic structure. Strongly inhibits the formation of NO by neuronal nitric oxide synthase (nNOS) at micromolar concentrations. Acts by a non-competitive mechanism, probably by binding to calcium/calmodulin and as a consequence blocking calmodulin attachment to nNOS. This is Aurein-2.3 from Ranoidea aurea (Green and golden bell frog).